The sequence spans 140 residues: Cytochrome b (140 aa).

The chain crosses the membrane as a helical span at residues Phe38–Ile58. Residues His42 and His56 each coordinate heme b. His61 lines the a ubiquinone pocket. The helical transmembrane segment at Phe85–Phe105 threads the bilayer.

It belongs to the cytochrome b family. As to quaternary structure, fungal cytochrome b-c1 complex contains 10 subunits; 3 respiratory subunits, 2 core proteins and 5 low-molecular weight proteins. Cytochrome b-c1 complex is a homodimer. Heme b is required as a cofactor.

It is found in the mitochondrion inner membrane. Its function is as follows. Component of the ubiquinol-cytochrome c reductase complex (complex III or cytochrome b-c1 complex) that is part of the mitochondrial respiratory chain. The b-c1 complex mediates electron transfer from ubiquinol to cytochrome c. Contributes to the generation of a proton gradient across the mitochondrial membrane that is then used for ATP synthesis. The protein is Cytochrome b (cob) of Aspergillus terreus.